The chain runs to 222 residues: Homing endonuclease I-ApeI (222 aa).

Probably functions as a monomer. Mg(2+) is required as a cofactor. Mn(2+) serves as cofactor.

Its function is as follows. Endonuclease involved in 16S rRNA intron I-alpha homing. Recognizes the minimal target 5'-GCAAGGCTGAAACTTAAAGG-3'; generates 4 base 3' protruding ends 5'-AAAC-3' and 5'-GTTT-3'. The protein is Homing endonuclease I-ApeI (apeI) of Aeropyrum pernix (strain ATCC 700893 / DSM 11879 / JCM 9820 / NBRC 100138 / K1).